The chain runs to 322 residues: uncharacterized protein (322 aa).

The Radical SAM core domain maps to 34 to 286; sequence KFKQKIFKIP…QRLSKDKVPE (253 aa). Residues Cys50, Cys58, and Cys61 each contribute to the [4Fe-4S] cluster site.

Belongs to the radical SAM superfamily. [4Fe-4S] cluster serves as cofactor.

This is an uncharacterized protein from Methanocaldococcus jannaschii (strain ATCC 43067 / DSM 2661 / JAL-1 / JCM 10045 / NBRC 100440) (Methanococcus jannaschii).